Reading from the N-terminus, the 1157-residue chain is Cell division cycle and apoptosis regulator protein 1 (1157 aa).

2 disordered regions span residues Pro-289–Val-365 and Leu-608–Leu-641. Basic and acidic residues-rich tracts occupy residues Arg-300–Pro-341 and Glu-348–Pro-359. Positions Lys-601–Glu-625 form a coiled coil. A compositionally biased stretch (acidic residues) spans Gly-617 to Asp-628. Residues Pro-643–Leu-677 form the SAP domain. Basic and acidic residues-rich tracts occupy residues Glu-685–Lys-694, Glu-701–Arg-721, Glu-804–Asp-824, and Ser-838–Tyr-861. Disordered regions lie at residues Glu-685–Arg-721 and Glu-804–Lys-926. Residues Arg-862–Asp-896 show a composition bias toward acidic residues. Over residues Ser-897–Lys-926 the composition is skewed to basic and acidic residues. Residues Asp-1043–Leu-1128 are a coiled coil. A Phosphoserine modification is found at Ser-1157.

The protein resides in the cytoplasm. The protein localises to the perinuclear region. Its function is as follows. Transcriptional coactivator for nuclear receptors which may play an important role in regulating cell growth and apoptosis. This is Cell division cycle and apoptosis regulator protein 1 (ccar1) from Xenopus laevis (African clawed frog).